A 116-amino-acid polypeptide reads, in one-letter code: Protein Rev (116 aa).

Residues S5 and S8 each carry the phosphoserine; by host CK2 modification. Positions 18-26 (LIKFLYQSN) are homomultimerization. The tract at residues 23-49 (YQSNPPPNPEGTRQARRNRRRRWRERQ) is disordered. The short motif at 34-50 (TRQARRNRRRRWRERQR) is the Nuclear localization signal and RNA-binding (RRE) element. Over residues 36 to 47 (QARRNRRRRWRE) the composition is skewed to basic residues. Residues 73 to 84 (LQLPPLERLTLD) carry the Nuclear export signal and binding to XPO1 motif. Phosphoserine; by host occurs at positions 92 and 99. Positions 92–116 (SGTQGVGSPQILVESPTVLESGTKE) are disordered.

This sequence belongs to the HIV-1 REV protein family. As to quaternary structure, homomultimer; when bound to the RRE. Multimeric assembly is essential for activity and may involve XPO1. Binds to human KPNB1, XPO1, TNPO1, RANBP5 and IPO7. Interacts with the viral Integrase. Interacts with human KHDRBS1. Interacts with human NAP1; this interaction decreases Rev multimerization and stimulates its activity. Interacts with human DEAD-box helicases DDX3 and DDX24; these interactions may serve for viral RNA export to the cytoplasm and packaging, respectively. Interacts with human PSIP1; this interaction may inhibit HIV-1 DNA integration by promoting dissociation of the Integrase-LEDGF/p75 complex. Post-translationally, asymmetrically arginine dimethylated at one site by host PRMT6. Methylation impairs the RNA-binding activity and export of viral RNA from the nucleus to the cytoplasm. Phosphorylated by protein kinase CK2. Presence of, and maybe binding to the N-terminus of the regulatory beta subunit of CK2 is necessary for CK2-mediated Rev's phosphorylation.

The protein resides in the host nucleus. It localises to the host nucleolus. The protein localises to the host cytoplasm. In terms of biological role, escorts unspliced or incompletely spliced viral pre-mRNAs (late transcripts) out of the nucleus of infected cells. These pre-mRNAs carry a recognition sequence called Rev responsive element (RRE) located in the env gene, that is not present in fully spliced viral mRNAs (early transcripts). This function is essential since most viral proteins are translated from unspliced or partially spliced pre-mRNAs which cannot exit the nucleus by the pathway used by fully processed cellular mRNAs. Rev itself is translated from a fully spliced mRNA that readily exits the nucleus. Rev's nuclear localization signal (NLS) binds directly to KPNB1/Importin beta-1 without previous binding to KPNA1/Importin alpha-1. KPNB1 binds to the GDP bound form of RAN (Ran-GDP) and targets Rev to the nucleus. In the nucleus, the conversion from Ran-GDP to Ran-GTP dissociates Rev from KPNB1 and allows Rev's binding to the RRE in viral pre-mRNAs. Rev multimerization on the RRE via cooperative assembly exposes its nuclear export signal (NES) to the surface. Rev can then form a complex with XPO1/CRM1 and Ran-GTP, leading to nuclear export of the complex. Conversion from Ran-GTP to Ran-GDP mediates dissociation of the Rev/RRE/XPO1/RAN complex, so that Rev can return to the nucleus for a subsequent round of export. Beside KPNB1, also seems to interact with TNPO1/Transportin-1, RANBP5/IPO5 and IPO7/RANBP7 for nuclear import. The nucleoporin-like HRB/RIP is an essential cofactor that probably indirectly interacts with Rev to release HIV RNAs from the perinuclear region to the cytoplasm. The chain is Protein Rev from Human immunodeficiency virus type 1 group M subtype B (isolate BRU/LAI) (HIV-1).